Consider the following 352-residue polypeptide: fMet-Leu-Phe receptor (352 aa).

The Extracellular segment spans residues 1 to 27 (MDSNASLPLNVSGGTQATPAGLVVLDV). N-linked (GlcNAc...) asparagine glycans are attached at residues Asn-4 and Asn-10. The helical transmembrane segment at 28-50 (FSYLILVVTFVLGVLGNGLVIWV) threads the bilayer. Residues 51 to 61 (TGFRMTHTVTT) lie on the Cytoplasmic side of the membrane. Residues 62–83 (ISYLNLALADFSFTSTLPFFIV) traverse the membrane as a helical segment. Topologically, residues 84-100 (TKALGGHWPFGWFLCKF) are extracellular. An intrachain disulfide couples Cys-98 to Cys-178. The chain crosses the membrane as a helical span at residues 101–121 (VFTIVDINLFGSVFLIALIAL). At 122 to 140 (DRCICVLHPVWAQNHRNVS) the chain is on the cytoplasmic side. A helical transmembrane segment spans residues 141–162 (LAKKVIVGPWICALLLTLPVII). Topologically, residues 163–207 (RVTTLSHPRAPGKMACTFDWSPWTEDPAEKLKVAISMFMVRGIIR) are extracellular. The chain crosses the membrane as a helical span at residues 208-228 (FIIGFSTPMSIVAVCYGLIAT). Over 229 to 244 (KIHRQGLIKSSRPLRV) the chain is Cytoplasmic. Residues 245-268 (LSFVVASFLLCWSPYQIAALIATV) traverse the membrane as a helical segment. The Extracellular segment spans residues 269–287 (RIRELLLGMGKDLRIVLDV). Residues 288–307 (TSFVAFFNSCLNPMLYVFMG) form a helical membrane-spanning segment. Residues 308–352 (QDFRERLIHSLPASLERALSEDSAQTSDTGTNSTSAPAEAELQAI) are Cytoplasmic-facing.

It belongs to the G-protein coupled receptor 1 family. Phosphorylated; which is necessary for desensitization. Neutrophils.

It localises to the cell membrane. Its function is as follows. High affinity receptor for N-formyl-methionyl peptides (fMLP), which are powerful neutrophil chemotactic factors. Binding of fMLP to the receptor stimulates intracellular calcium mobilization and superoxide anion release. This response is mediated via a G-protein that activates a phosphatidylinositol-calcium second messenger system. Receptor for TAFA4, mediates its effects on chemoattracting macrophages, promoting phagocytosis and increasing ROS release. Receptor for cathepsin CTSG, leading to increased phagocyte chemotaxis. In Oryctolagus cuniculus (Rabbit), this protein is fMet-Leu-Phe receptor (FPR1).